The sequence spans 151 residues: NADPH-dependent 7-cyano-7-deazaguanine reductase (151 aa).

The active-site Thioimide intermediate is Cys-51. The active-site Proton donor is Asp-58. Substrate contacts are provided by residues 73–75 (VES) and 92–93 (HE).

The protein belongs to the GTP cyclohydrolase I family. QueF type 1 subfamily.

The protein localises to the cytoplasm. It catalyses the reaction 7-aminomethyl-7-carbaguanine + 2 NADP(+) = 7-cyano-7-deazaguanine + 2 NADPH + 3 H(+). It functions in the pathway tRNA modification; tRNA-queuosine biosynthesis. Its function is as follows. Catalyzes the NADPH-dependent reduction of 7-cyano-7-deazaguanine (preQ0) to 7-aminomethyl-7-deazaguanine (preQ1). This chain is NADPH-dependent 7-cyano-7-deazaguanine reductase, found in Bacteroides fragilis (strain YCH46).